The sequence spans 345 residues: 3-hydroxy-5-methyl-1-naphthoate 3-O-methyltransferase (345 aa).

D205 serves as a coordination point for S-adenosyl-L-methionine. H252 acts as the Proton acceptor in catalysis.

The protein belongs to the class I-like SAM-binding methyltransferase superfamily. Cation-independent O-methyltransferase family.

The enzyme catalyses 3-hydroxy-5-methyl-1-naphthoate + S-adenosyl-L-methionine = 3-methoxy-5-methyl-1-naphthoate + S-adenosyl-L-homocysteine + H(+). It functions in the pathway antibiotic biosynthesis. Inhibited by different divalent cations, such as Mg(2+), Mn(2+), Fe(2+), Cu(2+) and Zn(2+). O-methyltransferase that mediates the formation of 3-methoxy-5-methyl-1-naphthoate from 3-hydroxy-5-methyl-1-naphthoate in the biosynthesis of the antitumor antibiotic azinomycin B. The polypeptide is 3-hydroxy-5-methyl-1-naphthoate 3-O-methyltransferase (Streptomyces sahachiroi).